The primary structure comprises 223 residues: UPF0173 metal-dependent hydrolase Amet_4625 (223 aa).

It belongs to the UPF0173 family.

This Alkaliphilus metalliredigens (strain QYMF) protein is UPF0173 metal-dependent hydrolase Amet_4625.